Consider the following 934-residue polypeptide: AP-2 complex subunit alpha (934 aa).

The tract at residues 623–670 (RVPENAEIRETKSPVPNSHNNAHSNAQTNHTSSANNANASSDLLGLST) is disordered. A compositionally biased stretch (polar residues) spans 636 to 645 (PVPNSHNNAH). A compositionally biased stretch (low complexity) spans 646–663 (SNAQTNHTSSANNANASS).

The protein belongs to the adapter complexes large subunit family. As to quaternary structure, adaptor protein complex 2 (AP-2) is a heterotetramer composed of two large adaptins (alpha-type and beta-type subunits), a medium adaptin (mu-type subunit AP50) and a small adaptin (sigma-type subunit AP17).

It localises to the cell membrane. The protein localises to the membrane. Its subcellular location is the coated pit. Its function is as follows. Adaptins are components of the adapter complexes which link clathrin to receptors in coated vesicles. Clathrin-associated protein complexes are believed to interact with the cytoplasmic tails of membrane proteins, leading to their selection and concentration. Alpha adaptin is a subunit of the plasma membrane adapter. This Anopheles gambiae (African malaria mosquito) protein is AP-2 complex subunit alpha.